Reading from the N-terminus, the 240-residue chain is Nicotinamide riboside kinase (240 aa).

13–21 (GCSSSGKTT) is a binding site for ATP. Mg(2+) contacts are provided by Thr20 and Asp39. The active-site Proton acceptor is the Asp39. Residues 39–42 (DDFY) and 59–60 (WD) contribute to the substrate site. An ATP-binding site is contributed by Arg158. Substrate is bound by residues Arg159 and 164–165 (GY). ATP contacts are provided by residues 162–164 (RKG) and 208–210 (KSK).

The protein belongs to the uridine kinase family. NRK subfamily.

The catalysed reaction is beta-nicotinamide D-riboside + ATP = beta-nicotinamide D-ribonucleotide + ADP + H(+). It carries out the reaction beta-D-ribosylnicotinate + ATP = nicotinate beta-D-ribonucleotide + ADP + H(+). It functions in the pathway cofactor biosynthesis; NAD(+) biosynthesis. Catalyzes the phosphorylation of nicotinamide riboside (NR) and nicotinic acid riboside (NaR) to form nicotinamide mononucleotide (NMN) and nicotinic acid mononucleotide (NaMN). This is Nicotinamide riboside kinase (NRK1) from Saccharomyces cerevisiae (strain ATCC 204508 / S288c) (Baker's yeast).